A 55-amino-acid chain; its full sequence is Large ribosomal subunit protein bL33 (55 aa).

This sequence belongs to the bacterial ribosomal protein bL33 family.

The chain is Large ribosomal subunit protein bL33 from Pectobacterium carotovorum subsp. carotovorum (strain PC1).